We begin with the raw amino-acid sequence, 243 residues long: Ribonuclease 3 (243 aa).

An RNase III domain is found at 19–144 (FNTLHKLLGF…LVGAIYLDRG (126 aa)). A Mg(2+)-binding site is contributed by E61. D65 is a catalytic residue. N130 and E133 together coordinate Mg(2+). E133 is a catalytic residue. In terms of domain architecture, DRBM spans 172-240 (SYKSLLIEWC…SKRAYYALQN (69 aa)).

This sequence belongs to the ribonuclease III family. As to quaternary structure, homodimer. The cofactor is Mg(2+).

Its subcellular location is the cytoplasm. It catalyses the reaction Endonucleolytic cleavage to 5'-phosphomonoester.. In terms of biological role, digests double-stranded RNA. Involved in the processing of primary rRNA transcript to yield the immediate precursors to the large and small rRNAs (23S and 16S). Processes some mRNAs, and tRNAs when they are encoded in the rRNA operon. Processes pre-crRNA and tracrRNA of type II CRISPR loci if present in the organism. This chain is Ribonuclease 3 (rnc), found in Zunongwangia profunda (strain DSM 18752 / CCTCC AB 206139 / SM-A87) (Wangia profunda).